The sequence spans 207 residues: Imidazole glycerol phosphate synthase subunit HisH (207 aa).

The 207-residue stretch at 1–207 (MIGIIDYGMG…KRFGQLVEGN (207 aa)) folds into the Glutamine amidotransferase type-1 domain. The Nucleophile role is filled by Cys79. Catalysis depends on residues His185 and Glu187.

Heterodimer of HisH and HisF.

The protein resides in the cytoplasm. It catalyses the reaction 5-[(5-phospho-1-deoxy-D-ribulos-1-ylimino)methylamino]-1-(5-phospho-beta-D-ribosyl)imidazole-4-carboxamide + L-glutamine = D-erythro-1-(imidazol-4-yl)glycerol 3-phosphate + 5-amino-1-(5-phospho-beta-D-ribosyl)imidazole-4-carboxamide + L-glutamate + H(+). It carries out the reaction L-glutamine + H2O = L-glutamate + NH4(+). It participates in amino-acid biosynthesis; L-histidine biosynthesis; L-histidine from 5-phospho-alpha-D-ribose 1-diphosphate: step 5/9. Functionally, IGPS catalyzes the conversion of PRFAR and glutamine to IGP, AICAR and glutamate. The HisH subunit catalyzes the hydrolysis of glutamine to glutamate and ammonia as part of the synthesis of IGP and AICAR. The resulting ammonia molecule is channeled to the active site of HisF. The polypeptide is Imidazole glycerol phosphate synthase subunit HisH (Shouchella clausii (strain KSM-K16) (Alkalihalobacillus clausii)).